A 102-amino-acid chain; its full sequence is Apolipoprotein A-II (102 aa).

A signal peptide spans 1 to 18; that stretch reads MKLLAMVALLVTICSLEG. Methionine sulfoxide is present on methionine 49.

This sequence belongs to the apolipoprotein A2 family. In terms of assembly, monomer. Interacts with NAXE and NDRG1. As to expression, plasma.

The protein resides in the secreted. In terms of biological role, may stabilize HDL (high density lipoprotein) structure by its association with lipids, and affect the HDL metabolism. The sequence is that of Apolipoprotein A-II (Apoa2) from Rattus norvegicus (Rat).